Consider the following 166-residue polypeptide: uncharacterized protein (166 aa).

This is an uncharacterized protein from Homo sapiens (Human).